Consider the following 242-residue polypeptide: Caffeoyl-CoA O-methyltransferase 2 (242 aa).

Lysine 16 contributes to the substrate binding site. Residues threonine 58, glutamate 80, 82-83 (GV), serine 88, aspartate 106, and alanine 135 contribute to the S-adenosyl-L-methionine site. Substrate is bound at residue aspartate 158. Aspartate 158 contacts a divalent metal cation. Residue aspartate 160 coordinates S-adenosyl-L-methionine. Positions 184 and 185 each coordinate a divalent metal cation. Asparagine 189 is a substrate binding site.

This sequence belongs to the class I-like SAM-binding methyltransferase superfamily. Cation-dependent O-methyltransferase family. CCoAMT subfamily. Requires a divalent metal cation as cofactor. Mostly expressed in petal limbs and tubes, and, at low levels, in stems, roots and leaves.

Its subcellular location is the cytoplasm. The protein resides in the cytosol. The enzyme catalyses (E)-caffeoyl-CoA + S-adenosyl-L-methionine = (E)-feruloyl-CoA + S-adenosyl-L-homocysteine + H(+). The catalysed reaction is (E)-5-hydroxyferuloyl-CoA + S-adenosyl-L-methionine = (E)-sinapoyl-CoA + S-adenosyl-L-homocysteine + H(+). It functions in the pathway aromatic compound metabolism; phenylpropanoid biosynthesis. Functionally, involved in the production of floral volatile phenylpropanoids in flowers of fragrant cultivars (e.g. cv. Mitchell and cv. V26) from cinnamic acid, a common precursor with the anthocyanin biosynthesis pathway involved in flower pigmentation. Methylates caffeoyl-CoA to feruloyl-CoA, also able to methylate 5-hydroxyferuloyl-CoA. This is Caffeoyl-CoA O-methyltransferase 2 from Petunia hybrida (Petunia).